We begin with the raw amino-acid sequence, 499 residues long: Cytosol aminopeptidase (499 aa).

Positions 267 and 272 each coordinate Mn(2+). Lys-279 is an active-site residue. Mn(2+)-binding residues include Asp-290, Asp-349, and Glu-351. Residue Arg-353 is part of the active site.

Belongs to the peptidase M17 family. Mn(2+) is required as a cofactor.

The protein resides in the cytoplasm. The catalysed reaction is Release of an N-terminal amino acid, Xaa-|-Yaa-, in which Xaa is preferably Leu, but may be other amino acids including Pro although not Arg or Lys, and Yaa may be Pro. Amino acid amides and methyl esters are also readily hydrolyzed, but rates on arylamides are exceedingly low.. It carries out the reaction Release of an N-terminal amino acid, preferentially leucine, but not glutamic or aspartic acids.. Its function is as follows. Presumably involved in the processing and regular turnover of intracellular proteins. Catalyzes the removal of unsubstituted N-terminal amino acids from various peptides. The protein is Cytosol aminopeptidase (pepA) of Buchnera aphidicola subsp. Acyrthosiphon pisum (strain APS) (Acyrthosiphon pisum symbiotic bacterium).